The chain runs to 153 residues: Regulatory protein RecX (153 aa).

This sequence belongs to the RecX family.

The protein localises to the cytoplasm. In terms of biological role, modulates RecA activity. This is Regulatory protein RecX from Pseudomonas aeruginosa (strain UCBPP-PA14).